The chain runs to 653 residues: Thioredoxin domain-containing protein 3 homolog (653 aa).

The region spanning 9 to 114 (LQETLNTQEA…QETIQETLKN (106 aa)) is the Thioredoxin domain. A disulfide bond links cysteine 38 and cysteine 41. An NDK 1 region spans residues 155–299 (KQITVALIKP…FFFPDFKPPT (145 aa)). Residues 300 to 323 (YRSAKSAASRASGRRSKTPSQKPR) form a disordered region. Over residues 301-310 (RSAKSAASRA) the composition is skewed to low complexity. NDK regions lie at residues 324–459 (LQRT…IFHV) and 459–597 (VEQT…QFDW). The segment at 603–653 (QAEEGEVNETSGEQPTDEQSGETEKTEEDGEHEGAQSDQQQAVSEAMEKEE) is disordered. Residues 617 to 633 (PTDEQSGETEKTEEDGE) are compositionally biased toward acidic residues.

In the C-terminal section; belongs to the NDK family. In terms of tissue distribution, testis-specific.

May be required during the final stages of sperm tail maturation. May act by reducing disulfide bonds within the sperm components. The sequence is that of Thioredoxin domain-containing protein 3 homolog (CiIC3) from Ciona intestinalis (Transparent sea squirt).